The sequence spans 466 residues: 3-isopropylmalate dehydratase large subunit (466 aa).

[4Fe-4S] cluster-binding residues include C347, C407, and C410.

This sequence belongs to the aconitase/IPM isomerase family. LeuC type 1 subfamily. In terms of assembly, heterodimer of LeuC and LeuD. It depends on [4Fe-4S] cluster as a cofactor.

It catalyses the reaction (2R,3S)-3-isopropylmalate = (2S)-2-isopropylmalate. Its pathway is amino-acid biosynthesis; L-leucine biosynthesis; L-leucine from 3-methyl-2-oxobutanoate: step 2/4. Functionally, catalyzes the isomerization between 2-isopropylmalate and 3-isopropylmalate, via the formation of 2-isopropylmaleate. In Blochmanniella pennsylvanica (strain BPEN), this protein is 3-isopropylmalate dehydratase large subunit.